The primary structure comprises 260 residues: Phosphatidylglycerol--prolipoprotein diacylglyceryl transferase (260 aa).

4 helical membrane passes run 17-37 (VVKW…SWIF), 52-72 (LTAA…LHVI), 85-105 (IFSG…IGLW), and 113-133 (FNLG…QAIG). R134 is a binding site for a 1,2-diacyl-sn-glycero-3-phospho-(1'-sn-glycerol). Helical transmembrane passes span 170-190 (APTQ…SLFI), 198-218 (GQLF…IGFV), and 227-247 (GLEQ…PLFI).

This sequence belongs to the Lgt family.

Its subcellular location is the cell membrane. The catalysed reaction is L-cysteinyl-[prolipoprotein] + a 1,2-diacyl-sn-glycero-3-phospho-(1'-sn-glycerol) = an S-1,2-diacyl-sn-glyceryl-L-cysteinyl-[prolipoprotein] + sn-glycerol 1-phosphate + H(+). It functions in the pathway protein modification; lipoprotein biosynthesis (diacylglyceryl transfer). Its function is as follows. Catalyzes the transfer of the diacylglyceryl group from phosphatidylglycerol to the sulfhydryl group of the N-terminal cysteine of a prolipoprotein, the first step in the formation of mature lipoproteins. This chain is Phosphatidylglycerol--prolipoprotein diacylglyceryl transferase, found in Dehalococcoides mccartyi (strain ATCC BAA-2100 / JCM 16839 / KCTC 5957 / BAV1).